The chain runs to 38 residues: Photosystem II reaction center protein L (38 aa).

A helical transmembrane segment spans residues 17–37; that stretch reads SLYWGLLLIFVLAVPFSNYFF.

Belongs to the PsbL family. PSII is composed of 1 copy each of membrane proteins PsbA, PsbB, PsbC, PsbD, PsbE, PsbF, PsbH, PsbI, PsbJ, PsbK, PsbL, PsbM, PsbT, PsbX, PsbY, PsbZ, Psb30/Ycf12, at least 3 peripheral proteins of the oxygen-evolving complex and a large number of cofactors. It forms dimeric complexes.

It is found in the plastid. It localises to the chloroplast thylakoid membrane. Functionally, one of the components of the core complex of photosystem II (PSII). PSII is a light-driven water:plastoquinone oxidoreductase that uses light energy to abstract electrons from H(2)O, generating O(2) and a proton gradient subsequently used for ATP formation. It consists of a core antenna complex that captures photons, and an electron transfer chain that converts photonic excitation into a charge separation. This subunit is found at the monomer-monomer interface and is required for correct PSII assembly and/or dimerization. The chain is Photosystem II reaction center protein L from Cedrus deodara (Deodar cedar).